We begin with the raw amino-acid sequence, 1582 residues long: MAGPGGWRDREVTDLGHLPDPTGIFSLDKTIGLGTYGRIYLGLHEKTGAFTAVKVMNARKTPLPEIGRRVRVNKYQKSVGWRYSDEEEDLRTELNLLRKYSFHKNIVSFYGAFFKLSPPGQRHQLWMVMELCAAGSVTDVVRMTSNQSLKEDWIAYICREILQGLAHLHAHRVIHRDIKGQNVLLTHNAEVKLVDFGVSAQVSRTNGRRNSFIGTPYWMAPEVIDCDEDPRRSYDYRSDVWSVGITAIEMAEGAPPLCNLQPLEALFVILRESAPTVKSSGWSRKFHNFMEKCTIKNFLFRPTSANMLQHPFVRDIKNERHVVESLTRHLTGIIKKRQKKGIPLIFEREEAIKEQYTVRRFRGPSCTHELLRLPTSSRCRPLRVLHGEPSQPRWLPDREEPQVQALQQLQGAARVFMPLQALDSAPKPLKGQAQAPQRLQGAARVFMPLQAQVKAKASKPLQMQIKAPPRLRRAARVLMPLQAQVRAPRLLQVQSQVSKKQQAQTQTSEPQDLDQVPEEFQGQDQVPEQQRQGQAPEQQQRHNQVPEQELEQNQAPEQPEVQEQAAEPAQAETEAEEPESLRVNAQVFLPLLSQDHHVLLPLHLDTQVLIPVEGQTEGSPQAQAWTLEPPQAIGSVQALIEGLSRDLLRAPNSNNSKPLGPLQTLMENLSSNRFYSQPEQAREKKSKVSTLRQALAKRLSPKRFRAKSSWRPEKLELSDLEARRQRRQRRWEDIFNQHEEELRQVDKDKEDESSDNDEVFHSIQAEVQIEPLKPYISNPKKIEVQERSPSVPNNQDHAHHVKFSSSVPQRSLLEQAQKPIDIRQRSSQNRQNWLAASESSSEEESPVTGRRSQSSPPYSTIDQKLLVDIHVPDGFKVGKISPPVYLTNEWVGYNALSEIFRNDWLTPAPVIQPPEEDGDYVELYDASADTDGDDDDESNDTFEDTYDHANGNDDLDNQVDQANDVCKDHDDDNNKFVDDVNNNYYEAPSCPRASYGRDGSCKQDGYDGSRGKEEAYRGYGSHTANRSHGGSAASEDNAAIGDQEEHAANIGSERRGSEGDGGKGVVRTSEESGALGLNGEENCSETDGPGLKRPASQDFEYLQEEPGGGNEASNAIDSGAAPSAPDHESDNKDISESSTQSDFSANHSSPSKGSGMSADANFASAILYAGFVEVPEESPKQPSEVNVNPLYVSPACKKPLIHMYEKEFTSEICCGSLWGVNLLLGTRSNLYLMDRSGKADITKLIRRRPFRQIQVLEPLNLLITISGHKNRLRVYHLTWLRNKILNNDPESKRRQEEMLKTEEACKAIDKLTGCEHFSVLQHEETTYIAIALKSSIHLYAWAPKSFDESTAIKVCIDQSADSEGDYMSYQAYIRILAKIQAADPVNRFKRPDELLHLLKLKVFPTLDHKPVTVDLAIGSEKRLKIFFSSADGYHLIDAESEVMSDVTLPKNPLEIIIPQNIIILPDCLGIGMMLTFNAEALSVEANEQLFKKILEMWKDIPSSIAFECTQRTTGWGQKAIEVRSLQSRVLESELKRRSIKKLRFLCTRGDKLFFTSTLRNHHSRVYFMTLGKLEELQSNYDV.

The 289-residue stretch at 25–313 (FSLDKTIGLG…SANMLQHPFV (289 aa)) folds into the Protein kinase domain. ATP-binding positions include 31–39 (IGLGTYGRI) and Lys-54. Asp-177 serves as the catalytic Proton acceptor. Composition is skewed to low complexity over residues 492-507 (QVQS…QTQT), 527-538 (PEQQRQGQAPEQ), and 551-572 (EQNQ…AQAE). The segment at 492–579 (QVQSQVSKKQ…QAETEAEEPE (88 aa)) is disordered. The stretch at 725–759 (QRRQRRWEDIFNQHEEELRQVDKDKEDESSDNDEV) forms a coiled coil. Disordered stretches follow at residues 783–859 (EVQE…PPYS) and 926–1156 (ASAD…GSGM). Composition is skewed to polar residues over residues 803–814 (FSSSVPQRSLLE), 825–834 (RSSQNRQNWL), and 850–859 (RRSQSSPPYS). Phosphoserine occurs at positions 852 and 855. A compositionally biased stretch (acidic residues) spans 926-944 (ASADTDGDDDDESNDTFED). 2 stretches are compositionally biased toward basic and acidic residues: residues 965 to 978 (VCKD…KFVD) and 999 to 1016 (GSCK…EEAY). Residues Ser-1027, Ser-1031, and Ser-1034 each carry the phosphoserine modification. Basic and acidic residues-rich tracts occupy residues 1043 to 1061 (QEEH…EGDG) and 1125 to 1135 (PDHESDNKDIS). Polar residues predominate over residues 1136-1154 (ESSTQSDFSANHSSPSKGS). A CNH domain is found at 1209 to 1552 (TSEICCGSLW…RFLCTRGDKL (344 aa)).

This sequence belongs to the protein kinase superfamily. STE Ser/Thr protein kinase family. STE20 subfamily.

The catalysed reaction is L-seryl-[protein] + ATP = O-phospho-L-seryl-[protein] + ADP + H(+). It carries out the reaction L-threonyl-[protein] + ATP = O-phospho-L-threonyl-[protein] + ADP + H(+). Functionally, may phosphorylate cofilin-1 and induce actin polymerization through this process, during the late stages of embryogenesis. Involved in the TNF-alpha-induced signaling pathway. This is Nik-related protein kinase (NRK) from Homo sapiens (Human).